A 414-amino-acid polypeptide reads, in one-letter code: Probable cytochrome P450 127A1 (414 aa).

Cys-364 provides a ligand contact to heme.

The protein belongs to the cytochrome P450 family. Heme is required as a cofactor.

Its function is as follows. Cytochromes P450 are a group of heme-thiolate monooxygenases. They oxidize a variety of structurally unrelated compounds, including steroids, fatty acids, and xenobiotics. The protein is Probable cytochrome P450 127A1 (cyp127A1) of Sinorhizobium fredii (strain NBRC 101917 / NGR234).